The following is a 215-amino-acid chain: 24 kDa Ras-like protein (215 aa).

17–24 (GGGGVGKS) is a GTP binding site. The Effector region motif lies at 39-47 (YDPTIEDSY). GTP is bound by residues 64-68 (DTAGQ) and 123-126 (NKCD). The interval 179-199 (QTGRPAIAAGGGGPAGSYTQD) is disordered. C212 is subject to Cysteine methyl ester. The S-farnesyl cysteine moiety is linked to residue C212. Residues 213-215 (VIA) constitute a propeptide, removed in mature form.

Belongs to the small GTPase superfamily. Ras family.

It is found in the cell membrane. The enzyme catalyses GTP + H2O = GDP + phosphate + H(+). In terms of biological role, ras proteins bind GDP/GTP and possess intrinsic GTPase activity. The chain is 24 kDa Ras-like protein (CC-RAS) from Coprinopsis cinerea (strain Okayama-7 / 130 / ATCC MYA-4618 / FGSC 9003) (Inky cap fungus).